The sequence spans 185 residues: MISDVLSDATTRMGKAVDAAKTDFSTVRTGRANPALFSSLLVAYYGTPTPLQQLASFQTPEARTLLITPYDRSALNDIEKALRDSDIGANPANDGNVIRVVMPELTEERRKEYVKIVHGKAEDARVSVRNVRRHAKEAIEKLVKDGDVGEDDGKRGEKDLDAATKKHIDQVDELLKNKEAELLGA.

It belongs to the RRF family.

It localises to the cytoplasm. In terms of biological role, responsible for the release of ribosomes from messenger RNA at the termination of protein biosynthesis. May increase the efficiency of translation by recycling ribosomes from one round of translation to another. The protein is Ribosome-recycling factor of Kocuria rhizophila (strain ATCC 9341 / DSM 348 / NBRC 103217 / DC2201).